The chain runs to 96 residues: Putative pterin-4-alpha-carbinolamine dehydratase (96 aa).

It belongs to the pterin-4-alpha-carbinolamine dehydratase family.

The catalysed reaction is (4aS,6R)-4a-hydroxy-L-erythro-5,6,7,8-tetrahydrobiopterin = (6R)-L-erythro-6,7-dihydrobiopterin + H2O. This chain is Putative pterin-4-alpha-carbinolamine dehydratase, found in Prochlorococcus marinus (strain SARG / CCMP1375 / SS120).